Consider the following 264-residue polypeptide: Phosphatidylglycerol--prolipoprotein diacylglyceryl transferase (264 aa).

Transmembrane regions (helical) follow at residues 14-34 (VGPL…LLFM), 57-77 (LLLY…VLFF), 89-109 (ILAI…VLVA), 127-147 (FIAP…FING), 176-196 (QLYQ…VYSA), 202-222 (KAVS…AEFF), and 235-255 (LGLS…VGLL). Arginine 140 contributes to the a 1,2-diacyl-sn-glycero-3-phospho-(1'-sn-glycerol) binding site.

The protein belongs to the Lgt family.

It is found in the cell inner membrane. It carries out the reaction L-cysteinyl-[prolipoprotein] + a 1,2-diacyl-sn-glycero-3-phospho-(1'-sn-glycerol) = an S-1,2-diacyl-sn-glyceryl-L-cysteinyl-[prolipoprotein] + sn-glycerol 1-phosphate + H(+). It functions in the pathway protein modification; lipoprotein biosynthesis (diacylglyceryl transfer). Catalyzes the transfer of the diacylglyceryl group from phosphatidylglycerol to the sulfhydryl group of the N-terminal cysteine of a prolipoprotein, the first step in the formation of mature lipoproteins. The polypeptide is Phosphatidylglycerol--prolipoprotein diacylglyceryl transferase (Aromatoleum aromaticum (strain DSM 19018 / LMG 30748 / EbN1) (Azoarcus sp. (strain EbN1))).